Consider the following 375-residue polypeptide: Pectate lyase 1 (375 aa).

A signal peptide spans 1 to 21; that stretch reads MASCTLLAVLVFLCAIVSCFS. C28 and C45 are joined by a disulfide. N110 carries N-linked (GlcNAc...) asparagine glycosylation. An intrachain disulfide couples C128 to C147. N148 carries an N-linked (GlcNAc...) asparagine glycan. D170 serves as a coordination point for Ca(2+). N178 carries an N-linked (GlcNAc...) asparagine glycan. Ca(2+)-binding residues include D194 and D198. R250 is an active-site residue. N293 is a glycosylation site (N-linked (GlcNAc...) asparagine). Cysteines 306 and 312 form a disulfide. N352 is a glycosylation site (N-linked (GlcNAc...) asparagine).

The protein belongs to the polysaccharide lyase 1 family. Amb a subfamily. Ca(2+) serves as cofactor.

It catalyses the reaction Eliminative cleavage of (1-&gt;4)-alpha-D-galacturonan to give oligosaccharides with 4-deoxy-alpha-D-galact-4-enuronosyl groups at their non-reducing ends.. It functions in the pathway glycan metabolism; pectin degradation; 2-dehydro-3-deoxy-D-gluconate from pectin: step 2/5. In terms of biological role, has pectate lyase activity. This chain is Pectate lyase 1, found in Chamaecyparis obtusa (Hinoki false-cypress).